The sequence spans 200 residues: Peptidyl-tRNA hydrolase (200 aa).

Y15 is a tRNA binding site. H20 acts as the Proton acceptor in catalysis. TRNA-binding residues include F66, N68, and N114.

It belongs to the PTH family. Monomer.

The protein localises to the cytoplasm. The catalysed reaction is an N-acyl-L-alpha-aminoacyl-tRNA + H2O = an N-acyl-L-amino acid + a tRNA + H(+). Hydrolyzes ribosome-free peptidyl-tRNAs (with 1 or more amino acids incorporated), which drop off the ribosome during protein synthesis, or as a result of ribosome stalling. In terms of biological role, catalyzes the release of premature peptidyl moieties from peptidyl-tRNA molecules trapped in stalled 50S ribosomal subunits, and thus maintains levels of free tRNAs and 50S ribosomes. The protein is Peptidyl-tRNA hydrolase of Ralstonia pickettii (strain 12J).